A 446-amino-acid chain; its full sequence is 3-phosphoshikimate 1-carboxyvinyltransferase (446 aa).

Lysine 26, serine 27, and arginine 31 together coordinate 3-phosphoshikimate. Phosphoenolpyruvate is bound at residue lysine 26. Glycine 100 and arginine 128 together coordinate phosphoenolpyruvate. 3-phosphoshikimate is bound by residues serine 171, serine 172, glutamine 173, serine 200, glutamate 315, and histidine 344. Glutamine 173 contacts phosphoenolpyruvate. The active-site Proton acceptor is the glutamate 315. 3 residues coordinate phosphoenolpyruvate: arginine 348, arginine 389, and lysine 414.

This sequence belongs to the EPSP synthase family. In terms of assembly, monomer.

It is found in the cytoplasm. It catalyses the reaction 3-phosphoshikimate + phosphoenolpyruvate = 5-O-(1-carboxyvinyl)-3-phosphoshikimate + phosphate. It functions in the pathway metabolic intermediate biosynthesis; chorismate biosynthesis; chorismate from D-erythrose 4-phosphate and phosphoenolpyruvate: step 6/7. Functionally, catalyzes the transfer of the enolpyruvyl moiety of phosphoenolpyruvate (PEP) to the 5-hydroxyl of shikimate-3-phosphate (S3P) to produce enolpyruvyl shikimate-3-phosphate and inorganic phosphate. The protein is 3-phosphoshikimate 1-carboxyvinyltransferase of Mycolicibacterium gilvum (strain PYR-GCK) (Mycobacterium gilvum (strain PYR-GCK)).